Reading from the N-terminus, the 493-residue chain is uncharacterized protein (493 aa).

S328 bears the Phosphoserine mark. Residues 466-486 (AESNSGRGQNSKTKTTSVNLS) show a composition bias toward polar residues. The segment at 466 to 493 (AESNSGRGQNSKTKTTSVNLSRNKRTRT) is disordered.

This is an uncharacterized protein from Schizosaccharomyces pombe (strain 972 / ATCC 24843) (Fission yeast).